Here is a 227-residue protein sequence, read N- to C-terminus: Ribose-5-phosphate isomerase A (227 aa).

Substrate-binding positions include 26 to 29 (TGST), 82 to 85 (DGAD), and 95 to 98 (KGGG). Glu104 acts as the Proton acceptor in catalysis. Lys122 is a substrate binding site.

It belongs to the ribose 5-phosphate isomerase family. As to quaternary structure, homodimer.

It catalyses the reaction aldehydo-D-ribose 5-phosphate = D-ribulose 5-phosphate. It participates in carbohydrate degradation; pentose phosphate pathway; D-ribose 5-phosphate from D-ribulose 5-phosphate (non-oxidative stage): step 1/1. In terms of biological role, catalyzes the reversible conversion of ribose-5-phosphate to ribulose 5-phosphate. This chain is Ribose-5-phosphate isomerase A, found in Streptococcus pneumoniae serotype 4 (strain ATCC BAA-334 / TIGR4).